A 382-amino-acid chain; its full sequence is Palmitoyltransferase ZDHHC16B (382 aa).

Residues 1-75 (MRSWRWSVSR…IYWLVDNMTR (75 aa)) are Cytoplasmic-facing. The helical transmembrane segment at 76 to 96 (WFGVVFVCLVMALTSSVVVIV) threads the bilayer. The Lumenal segment spans residues 97–107 (YLCVLPIIFSS). Residues 108–130 (YPVYWILWHLCYGHWNLLMVVFH) traverse the membrane as a helical segment. Over 131 to 196 (YYKATTTQPG…NNCVGHFNHR (66 aa)) the chain is Cytoplasmic. One can recognise a DHHC domain in the interval 153 to 203 (TICKKCIVPKPARTHHCSICNRCILKMDHHCPWLNNCVGHFNHRYFFSFCL). The active-site S-palmitoyl cysteine intermediate is the C183. Residues 197 to 217 (YFFSFCLFMTMGCVYCSISAK) traverse the membrane as a helical segment. Over 218–275 (DMFLDAYNAIESGRYKGGASQGEAVPGAGLIYISFQHQSSYQTPPPAFTHQERMVHKS) the chain is Lumenal. Residues 276 to 296 (LVYLWVLTSSVAVALGALTLW) form a helical membrane-spanning segment. Residues 297–382 (HAILITRGET…PAYKSSTTAI (86 aa)) lie on the Cytoplasmic side of the membrane.

It belongs to the DHHC palmitoyltransferase family.

It localises to the endoplasmic reticulum membrane. It catalyses the reaction L-cysteinyl-[protein] + hexadecanoyl-CoA = S-hexadecanoyl-L-cysteinyl-[protein] + CoA. Functionally, palmitoyl acyltransferase that mediates palmitoylation of proteins and is required during embryonic heart development. Involved in the proliferation of neural stem cells by regulating the FGF/ERK pathway. The polypeptide is Palmitoyltransferase ZDHHC16B (Danio rerio (Zebrafish)).